The sequence spans 876 residues: Xylosyltransferase oxt (876 aa).

At 1–14 (MEQSVSARWLKRYR) the chain is on the cytoplasmic side. The helical; Signal-anchor for type II membrane protein transmembrane segment at 15 to 35 (AFFLILLLIVAIQLFLAYKSL) threads the bilayer. At 36-876 (DIVGGGSGSG…PKSDVDALLK (841 aa)) the chain is on the lumenal side. The tract at residues 48–67 (AAEAPASPPPPHAQARVQPP) is disordered. 4 cysteine pairs are disulfide-bonded: Cys-83–Cys-111, Cys-127–Cys-465, Cys-484–Cys-497, and Cys-486–Cys-495. Residues Asn-131 and Asn-135 are each glycosylated (N-linked (GlcNAc...) asparagine). Residues 134-228 (ANVSLGCFKD…FYAMNIYETG (95 aa)) form the WSC domain. UDP-alpha-D-xylose contacts are provided by residues Asp-283 and 312–314 (TIW). Asn-342 carries N-linked (GlcNAc...) asparagine glycosylation. 415–416 (DW) lines the UDP-alpha-D-xylose pocket. UDP-alpha-D-xylose is bound by residues Ser-498 and 522–523 (RK). Asn-696 and Asn-725 each carry an N-linked (GlcNAc...) asparagine glycan. A disulfide bridge links Cys-842 with Cys-855.

It belongs to the glycosyltransferase 14 family. XylT subfamily. Ca(2+) is required as a cofactor. It depends on Mn(2+) as a cofactor. Mg(2+) serves as cofactor.

It localises to the endoplasmic reticulum membrane. Its subcellular location is the golgi apparatus membrane. It carries out the reaction UDP-alpha-D-xylose + L-seryl-[protein] = 3-O-(beta-D-xylosyl)-L-seryl-[protein] + UDP + H(+). It participates in glycan metabolism; chondroitin sulfate biosynthesis. Its pathway is glycan metabolism; heparan sulfate biosynthesis. In terms of biological role, catalyzes the first step in biosynthesis of glycosaminoglycan. Transfers D-xylose from UDP-D-xylose to specific serine residues of the core protein. The chain is Xylosyltransferase oxt from Drosophila melanogaster (Fruit fly).